The primary structure comprises 311 residues: 4-hydroxy-tetrahydrodipicolinate synthase (311 aa).

Pyruvate is bound at residue threonine 49. The active-site Proton donor/acceptor is tyrosine 138. The active-site Schiff-base intermediate with substrate is the lysine 166. Valine 207 contributes to the pyruvate binding site.

It belongs to the DapA family. As to quaternary structure, homotetramer; dimer of dimers.

It localises to the cytoplasm. It carries out the reaction L-aspartate 4-semialdehyde + pyruvate = (2S,4S)-4-hydroxy-2,3,4,5-tetrahydrodipicolinate + H2O + H(+). The protein operates within amino-acid biosynthesis; L-lysine biosynthesis via DAP pathway; (S)-tetrahydrodipicolinate from L-aspartate: step 3/4. Catalyzes the condensation of (S)-aspartate-beta-semialdehyde [(S)-ASA] and pyruvate to 4-hydroxy-tetrahydrodipicolinate (HTPA). The chain is 4-hydroxy-tetrahydrodipicolinate synthase from Lactobacillus helveticus (strain DPC 4571).